A 1146-amino-acid chain; its full sequence is Activator of SKN7 protein 10 (1146 aa).

Positions 1 to 15 (MSDYFSSRPSQTLTP) are enriched in polar residues. 2 disordered regions span residues 1–32 (MSDY…ASSI) and 171–194 (ITDP…KVGL). Ser-344 carries the post-translational modification Phosphoserine. The PH domain maps to 482–606 (CIKAGYFLKK…DCTLKDASST (125 aa)). Residues 553–575 (NNHHRQASDVHNSSTTTGGTAGA) are disordered. The span at 564–575 (NSSTTTGGTAGA) shows a compositional bias: low complexity. Residue Ser-793 is modified to Phosphoserine. Thr-808 carries the post-translational modification Phosphothreonine. 2 disordered regions span residues 835–854 (MATS…PQSM) and 909–982 (PVNS…TAMR). A compositionally biased stretch (low complexity) spans 912–924 (SPGSSNSESSSGG). Residues 939 to 950 (YTQRNSEGSSPC) show a composition bias toward polar residues. A Phosphoserine modification is found at Ser-944. Residues 958–968 (QQQQPLQMQPL) show a composition bias toward low complexity. Residue Ser-969 is modified to Phosphoserine. Over residues 969–982 (SRTSSSSVNVTAMR) the composition is skewed to polar residues. Residue Thr-1017 is modified to Phosphothreonine. Phosphoserine is present on residues Ser-1070, Ser-1095, and Ser-1098. The disordered stretch occupies residues 1124–1146 (GIQEDDGDSTNNDTIKLNQSIYS). Polar residues predominate over residues 1132–1146 (STNNDTIKLNQSIYS).

It belongs to the RGC1 family. As to quaternary structure, component of the RNA polymerase II holoenzyme. Interacts with RPO21 and SSN8. Post-translationally, phosphorylated in response to various stresses. stress-induced phosphorylation is partially dependent on HOG1.

It is found in the cytoplasm. In terms of biological role, positive regulator of FPS1 glycerol channel required for the glycerol efflux. As a component of the RNA polymerase II holoenzyme, is required for SSN8 destruction in response to oxidative stress but not heat shock. Required for cell survival in response to heat shock independent of SSN8. The chain is Activator of SKN7 protein 10 (ASK10) from Saccharomyces cerevisiae (strain ATCC 204508 / S288c) (Baker's yeast).